The primary structure comprises 141 residues: Large ribosomal subunit protein uL11 (141 aa).

The protein belongs to the universal ribosomal protein uL11 family. In terms of assembly, part of the ribosomal stalk of the 50S ribosomal subunit. Interacts with L10 and the large rRNA to form the base of the stalk. L10 forms an elongated spine to which L12 dimers bind in a sequential fashion forming a multimeric L10(L12)X complex. One or more lysine residues are methylated.

Forms part of the ribosomal stalk which helps the ribosome interact with GTP-bound translation factors. This is Large ribosomal subunit protein uL11 from Thermotoga neapolitana (strain ATCC 49049 / DSM 4359 / NBRC 107923 / NS-E).